Consider the following 480-residue polypeptide: Protein nucleotidyltransferase YdiU (480 aa).

ATP is bound by residues Gly-86, Gly-88, Arg-89, Lys-109, Asp-121, Gly-122, Arg-172, and Arg-179. Catalysis depends on Asp-248, which acts as the Proton acceptor. The Mg(2+) site is built by Asn-249 and Asp-258. Asp-258 contacts ATP.

The protein belongs to the SELO family. It depends on Mg(2+) as a cofactor. The cofactor is Mn(2+).

It catalyses the reaction L-seryl-[protein] + ATP = 3-O-(5'-adenylyl)-L-seryl-[protein] + diphosphate. It carries out the reaction L-threonyl-[protein] + ATP = 3-O-(5'-adenylyl)-L-threonyl-[protein] + diphosphate. The catalysed reaction is L-tyrosyl-[protein] + ATP = O-(5'-adenylyl)-L-tyrosyl-[protein] + diphosphate. The enzyme catalyses L-histidyl-[protein] + UTP = N(tele)-(5'-uridylyl)-L-histidyl-[protein] + diphosphate. It catalyses the reaction L-seryl-[protein] + UTP = O-(5'-uridylyl)-L-seryl-[protein] + diphosphate. It carries out the reaction L-tyrosyl-[protein] + UTP = O-(5'-uridylyl)-L-tyrosyl-[protein] + diphosphate. Functionally, nucleotidyltransferase involved in the post-translational modification of proteins. It can catalyze the addition of adenosine monophosphate (AMP) or uridine monophosphate (UMP) to a protein, resulting in modifications known as AMPylation and UMPylation. In Salmonella schwarzengrund (strain CVM19633), this protein is Protein nucleotidyltransferase YdiU.